Here is a 99-residue protein sequence, read N- to C-terminus: Putative membrane protein insertion efficiency factor (99 aa).

The protein belongs to the UPF0161 family.

The protein resides in the cell membrane. Functionally, could be involved in insertion of integral membrane proteins into the membrane. The chain is Putative membrane protein insertion efficiency factor from Corynebacterium efficiens (strain DSM 44549 / YS-314 / AJ 12310 / JCM 11189 / NBRC 100395).